The chain runs to 375 residues: MQCALYDAGRCRSCQWITQPIPEQLSAKTADLKNLLADFPVEEWCAPVSGPEQGFRNKAKMVVSGSVEKPLLGMLHRDGTPEDLCDCPLYPASFAPVFAALKPFIARAGLTPYNVARKRGELKYILLTESQSDGGMMLRFVLRSDTKLAQLRKALPWLQEQLPQLKVITVNIQPVHMAIMEGETEIYLTEQQALAERFNDVPLWIRPQSFFQTNPAVASQLYATARDWVRQLPVKHMWDLFCGVGGFGLHCATPDMQLTGIEIAPEAIACAKQSAAELGLTRLQFQALDSTQFASAQGEVPELVLVNPPRRGIGKPLCDYLSTMAPRFIIYSSCNAQTMAKDIRELPGYRIERVQLFDMFPHTAHYEVLTLLVKQ.

[4Fe-4S] cluster-binding residues include cysteine 3, cysteine 11, cysteine 14, and cysteine 87. S-adenosyl-L-methionine is bound by residues glutamine 212, phenylalanine 241, glutamate 262, and asparagine 307. Cysteine 334 serves as the catalytic Nucleophile.

This sequence belongs to the class I-like SAM-binding methyltransferase superfamily. RNA M5U methyltransferase family. RlmC subfamily.

The enzyme catalyses uridine(747) in 23S rRNA + S-adenosyl-L-methionine = 5-methyluridine(747) in 23S rRNA + S-adenosyl-L-homocysteine + H(+). In terms of biological role, catalyzes the formation of 5-methyl-uridine at position 747 (m5U747) in 23S rRNA. The protein is 23S rRNA (uracil(747)-C(5))-methyltransferase RlmC of Escherichia coli O127:H6 (strain E2348/69 / EPEC).